Consider the following 530-residue polypeptide: Probable ATP-binding protein YbiT (530 aa).

ABC transporter domains follow at residues 2 to 252 (LVSS…ERLL) and 320 to 526 (LEVE…YLRS). Residues 34–41 (GANGSGKS) and 352–359 (GTNGVGKS) contribute to the ATP site.

Belongs to the ABC transporter superfamily. ABCF family. YbiT subfamily.

The polypeptide is Probable ATP-binding protein YbiT (ybiT) (Escherichia coli O157:H7).